The primary structure comprises 226 residues: MRAVVLLSGGMDSLVTTAIAAHLGYELAALHINYGQRTEKRELVAFQKICDFYRIERRLEINFEHLSLIGGSSLTDLAMPVTTAKLHSKEIPTSYVAFRNANMLSVAVSWAEVIGANKIFIGAVDEDSSGYPDCRVNFFQAFNELIKHGTKPDTRIEIQTPVISLKKWEIVIKGMELEVPFEHSWSCYKSEHVACGVCDSCALRLRAFEQAGIRDPIEYKIRPSYI.

Leucine 7–threonine 17 contributes to the ATP binding site. Zn(2+) is bound by residues cysteine 187, cysteine 195, cysteine 198, and cysteine 201.

Belongs to the QueC family. Requires Zn(2+) as cofactor.

It carries out the reaction 7-carboxy-7-deazaguanine + NH4(+) + ATP = 7-cyano-7-deazaguanine + ADP + phosphate + H2O + H(+). The protein operates within purine metabolism; 7-cyano-7-deazaguanine biosynthesis. Functionally, catalyzes the ATP-dependent conversion of 7-carboxy-7-deazaguanine (CDG) to 7-cyano-7-deazaguanine (preQ(0)). The protein is 7-cyano-7-deazaguanine synthase of Chloroherpeton thalassium (strain ATCC 35110 / GB-78).